The chain runs to 108 residues: Competence protein ComGC (108 aa).

An N-terminal signal peptide occupies residues 1–13 (MKKMMTFLKKAKV). The tract at residues 14-39 (KAFTLVEMLVVLLIISVLFLLFVPNL) is may be involved in polymerization of ComGC. F16 carries the post-translational modification N-methylphenylalanine. A helical transmembrane segment spans residues 16–36 (FTLVEMLVVLLIISVLFLLFV).

It belongs to the ComGC family. As to quaternary structure, the transformation pili are flexible filaments, consisting mainly of the major pilin ComGC and smaller amounts of the minor pilins, including at least ComGD, ComGF and ComGG, and perhaps ComGE. Homodimer. Forms higher-order multimers. Interacts with ComGG; the interaction is probably direct. Undergoes proteolytic cleavage.

The protein localises to the cell membrane. It is found in the cell surface. Its subcellular location is the fimbrium. The protein resides in the secreted. Major component of the type IV-like pilus (T4P) that plays a role in transformation. Transformation pili are dynamically extended and retracted, perhaps thereby promoting DNA uptake and transformation. Required for transformation. Required for DNA binding. This is Competence protein ComGC from Streptococcus pneumoniae serotype 4 (strain ATCC BAA-334 / TIGR4).